The sequence spans 34 residues: Phalloidin proprotein (34 aa).

Residues 1 to 10 (MSDINASRLP) constitute a propeptide that is removed on maturation. The segment at residues 11 to 17 (AWLATCP) is a cross-link (cyclopeptide (Ala-Pro)). The 2'-cysteinyl-6'-hydroxytryptophan sulfoxide (Trp-Cys) cross-link spans 12–16 (WLATC). The propeptide occupies 18–34 (CVGDDVNPTLSRGESLC).

The protein belongs to the MSDIN fungal toxin family. In terms of processing, processed by the macrocyclase-peptidase enzyme POPB to yield a toxic cyclic heptapeptide. POPB first removes 10 residues from the N-terminus. Conformational trapping of the remaining peptide forces the enzyme to release this intermediate rather than proceed to macrocyclization. The enzyme rebinds the remaining peptide in a different conformation and catalyzes macrocyclization of the N-terminal 7 residues.

Its function is as follows. Toxin that belongs to the bicyclic heptapeptides called phallotoxins. Although structurally related to amatoxins, phallotoxins have a different mode of action, which is the stabilization of F-actin. Phallotoxins are poisonous when administered parenterally, but not orally because of poor absorption. The chain is Phalloidin proprotein from Amanita phalloides (Death cap).